Here is a 261-residue protein sequence, read N- to C-terminus: Zinc import ATP-binding protein ZnuC (261 aa).

One can recognise an ABC transporter domain in the interval 6 to 227 (IQLNNIHLRF…PEYLKLFGKQ (222 aa)). 38 to 45 (GPNGAGKS) is a binding site for ATP.

Belongs to the ABC transporter superfamily. Zinc importer (TC 3.A.1.15.5) family. In terms of assembly, the complex is composed of two ATP-binding proteins (ZnuC), two transmembrane proteins (ZnuB) and a solute-binding protein (ZnuA).

It localises to the cell inner membrane. The enzyme catalyses Zn(2+)(out) + ATP(in) + H2O(in) = Zn(2+)(in) + ADP(in) + phosphate(in) + H(+)(in). Part of the ABC transporter complex ZnuABC involved in zinc import. Responsible for energy coupling to the transport system. The chain is Zinc import ATP-binding protein ZnuC from Saccharophagus degradans (strain 2-40 / ATCC 43961 / DSM 17024).